A 93-amino-acid polypeptide reads, in one-letter code: NADH-ubiquinone oxidoreductase chain 4L (93 aa).

Helical transmembrane passes span 2-22, 27-47, and 62-82; these read ALYE…GFVL, IILM…LVLV, and IYII…LVAY.

It belongs to the complex I subunit 4L family.

It is found in the mitochondrion inner membrane. The enzyme catalyses a ubiquinone + NADH + 5 H(+)(in) = a ubiquinol + NAD(+) + 4 H(+)(out). In terms of biological role, core subunit of the mitochondrial membrane respiratory chain NADH dehydrogenase (Complex I) that is believed to belong to the minimal assembly required for catalysis. Complex I functions in the transfer of electrons from NADH to the respiratory chain. The immediate electron acceptor for the enzyme is believed to be ubiquinone. This Mycosarcoma maydis (Corn smut fungus) protein is NADH-ubiquinone oxidoreductase chain 4L (ND4L).